The primary structure comprises 157 residues: Small ribosomal subunit protein uS7 (157 aa).

Belongs to the universal ribosomal protein uS7 family. Part of the 30S ribosomal subunit. Contacts proteins S9 and S11.

Functionally, one of the primary rRNA binding proteins, it binds directly to 16S rRNA where it nucleates assembly of the head domain of the 30S subunit. Is located at the subunit interface close to the decoding center, probably blocks exit of the E-site tRNA. In Chlamydia caviae (strain ATCC VR-813 / DSM 19441 / 03DC25 / GPIC) (Chlamydophila caviae), this protein is Small ribosomal subunit protein uS7.